The primary structure comprises 500 residues: Aspartyl/glutamyl-tRNA(Asn/Gln) amidotransferase subunit B (500 aa).

It belongs to the GatB/GatE family. GatB subfamily. In terms of assembly, heterotrimer of A, B and C subunits.

The catalysed reaction is L-glutamyl-tRNA(Gln) + L-glutamine + ATP + H2O = L-glutaminyl-tRNA(Gln) + L-glutamate + ADP + phosphate + H(+). It carries out the reaction L-aspartyl-tRNA(Asn) + L-glutamine + ATP + H2O = L-asparaginyl-tRNA(Asn) + L-glutamate + ADP + phosphate + 2 H(+). In terms of biological role, allows the formation of correctly charged Asn-tRNA(Asn) or Gln-tRNA(Gln) through the transamidation of misacylated Asp-tRNA(Asn) or Glu-tRNA(Gln) in organisms which lack either or both of asparaginyl-tRNA or glutaminyl-tRNA synthetases. The reaction takes place in the presence of glutamine and ATP through an activated phospho-Asp-tRNA(Asn) or phospho-Glu-tRNA(Gln). This Clavibacter michiganensis subsp. michiganensis (strain NCPPB 382) protein is Aspartyl/glutamyl-tRNA(Asn/Gln) amidotransferase subunit B.